The sequence spans 196 residues: Peptide deformylase (196 aa).

Residues Cys97 and His139 each contribute to the Fe cation site. Glu140 is a catalytic residue. Residue His143 participates in Fe cation binding. Basic and acidic residues predominate over residues 171-187; the sequence is LDAQEPKRAPHSPHTDA. A disordered region spans residues 171-196; that stretch reads LDAQEPKRAPHSPHTDAQKPGAASDL.

The protein belongs to the polypeptide deformylase family. Fe(2+) serves as cofactor.

It catalyses the reaction N-terminal N-formyl-L-methionyl-[peptide] + H2O = N-terminal L-methionyl-[peptide] + formate. Functionally, removes the formyl group from the N-terminal Met of newly synthesized proteins. Requires at least a dipeptide for an efficient rate of reaction. N-terminal L-methionine is a prerequisite for activity but the enzyme has broad specificity at other positions. The protein is Peptide deformylase of Methylocella silvestris (strain DSM 15510 / CIP 108128 / LMG 27833 / NCIMB 13906 / BL2).